A 407-amino-acid polypeptide reads, in one-letter code: Na(+)-translocating NADH-quinone reductase subunit F (407 aa).

The helical transmembrane segment at 4–24 threads the bilayer; sequence IILGVFFFTAIVVALVFVILG. The 93-residue stretch at 33-125 folds into the 2Fe-2S ferredoxin-type domain; it reads GNVEVLINGE…NMKIHVHEEV (93 aa). [2Fe-2S] cluster-binding residues include cysteine 68, cysteine 74, cysteine 77, and cysteine 109. Residues 128-269 form the FAD-binding FR-type domain; it reads VKKWECTVRS…SGPFGEFFAR (142 aa).

The protein belongs to the NqrF family. As to quaternary structure, composed of six subunits; NqrA, NqrB, NqrC, NqrD, NqrE and NqrF. Requires [2Fe-2S] cluster as cofactor. FAD serves as cofactor.

Its subcellular location is the cell inner membrane. The enzyme catalyses a ubiquinone + n Na(+)(in) + NADH + H(+) = a ubiquinol + n Na(+)(out) + NAD(+). NQR complex catalyzes the reduction of ubiquinone-1 to ubiquinol by two successive reactions, coupled with the transport of Na(+) ions from the cytoplasm to the periplasm. The first step is catalyzed by NqrF, which accepts electrons from NADH and reduces ubiquinone-1 to ubisemiquinone by a one-electron transfer pathway. The protein is Na(+)-translocating NADH-quinone reductase subunit F of Methylococcus capsulatus (strain ATCC 33009 / NCIMB 11132 / Bath).